The sequence spans 466 residues: Polycomb group protein FIE1 (466 aa).

Residues 1-10 (MGPTSRNHKS) are compositionally biased toward basic residues. Residues 1 to 71 (MGPTSRNHKS…GEGEPQETVL (71 aa)) form a disordered region. Residues 31–49 (SITASASASAFASPAVANS) show a composition bias toward low complexity. WD repeat units follow at residues 167-209 (DMNE…IYKS), 212-252 (GHGG…LILV), 258-298 (GHRH…EYVE), 324-361 (IHSN…ENPG), 374-414 (PECN…PVLI), and 421-460 (QVKS…TAPV).

The protein belongs to the WD repeat ESC family. As to quaternary structure, interacts with EZ1 and CLF. Component of the polycomb repressive complex 2 (PRC2), which methylates 'Lys-27' residues of histone H3 (H3K27me3), leading to transcriptional repression of the affected target gene. In terms of tissue distribution, expressed specifically in seed endosperm.

Its function is as follows. Polycomb group (PcG) protein. PcG proteins act by forming multiprotein complexes, which are required to maintain the transcriptionally repressive state of homeotic genes throughout development. PcG proteins are not required to initiate repression, but to maintain it during later stages of development. They act via the methylation of histones, rendering chromatin heritably changed in its expressibility. Together with EZ1 and CLF forms a complex that is involved in gene transcriptional repression by trimethylation on histone H3 'Lys-27' (H3K27me3) of target genes. Involved in the regulation of embryo and seed endosperm development. FIE1-containing PcG complex in seed endosperm regulates the expression of various transcription factors by trimethylation on histone H3 'Lys-27' (H3K27me3) of target genes. Involved in the overall expression regulation of nutrient metabolism genes, such as prolamin synthesis and seed storage protein synthesis genes. Can regulate valine, leucine and isoleucine metabolism-related genes. The polypeptide is Polycomb group protein FIE1 (Oryza sativa subsp. japonica (Rice)).